Consider the following 398-residue polypeptide: Tryptophan synthase beta chain (398 aa).

An N6-(pyridoxal phosphate)lysine modification is found at lysine 89.

This sequence belongs to the TrpB family. Tetramer of two alpha and two beta chains. Requires pyridoxal 5'-phosphate as cofactor.

The enzyme catalyses (1S,2R)-1-C-(indol-3-yl)glycerol 3-phosphate + L-serine = D-glyceraldehyde 3-phosphate + L-tryptophan + H2O. It functions in the pathway amino-acid biosynthesis; L-tryptophan biosynthesis; L-tryptophan from chorismate: step 5/5. In terms of biological role, the beta subunit is responsible for the synthesis of L-tryptophan from indole and L-serine. This chain is Tryptophan synthase beta chain, found in Methanopyrus kandleri (strain AV19 / DSM 6324 / JCM 9639 / NBRC 100938).